A 131-amino-acid polypeptide reads, in one-letter code: Nitrogenase-stabilizing/protective protein NifW (131 aa).

Belongs to the NifW family. In terms of assembly, homotrimer; associates with NifD.

May protect the nitrogenase Fe-Mo protein from oxidative damage. This is Nitrogenase-stabilizing/protective protein NifW from Frankia alni (strain DSM 45986 / CECT 9034 / ACN14a).